Here is a 330-residue protein sequence, read N- to C-terminus: 5-dehydro-2-deoxygluconokinase (330 aa).

Belongs to the carbohydrate kinase PfkB family.

It carries out the reaction 5-dehydro-2-deoxy-D-gluconate + ATP = 6-phospho-5-dehydro-2-deoxy-D-gluconate + ADP + H(+). It participates in polyol metabolism; myo-inositol degradation into acetyl-CoA; acetyl-CoA from myo-inositol: step 5/7. Functionally, catalyzes the phosphorylation of 5-dehydro-2-deoxy-D-gluconate (2-deoxy-5-keto-D-gluconate or DKG) to 6-phospho-5-dehydro-2-deoxy-D-gluconate (DKGP). The sequence is that of 5-dehydro-2-deoxygluconokinase from Bacillus velezensis (strain DSM 23117 / BGSC 10A6 / LMG 26770 / FZB42) (Bacillus amyloliquefaciens subsp. plantarum).